Reading from the N-terminus, the 261-residue chain is 3-hydroxyacyl-CoA dehydrogenase type-2 (261 aa).

Ala-2 carries the post-translational modification N-acetylalanine. NAD(+) contacts are provided by Ser-20 and Asp-41. The residue at position 53 (Lys-53) is an N6-acetyllysine; alternate. At Lys-53 the chain carries N6-succinyllysine; alternate. Val-65 is an NAD(+) binding site. The residue at position 69 (Lys-69) is an N6-acetyllysine. Cys-91 is a binding site for NAD(+). N6-acetyllysine occurs at positions 99 and 105. N6-acetyllysine; alternate is present on Lys-107. Lys-107 is modified (N6-succinyllysine; alternate). Ser-155 contributes to the substrate binding site. Tyr-168, Lys-172, Phe-201, and Thr-203 together coordinate NAD(+). Tyr-168 functions as the Proton acceptor in the catalytic mechanism. Lys-212 is modified (N6-acetyllysine; alternate). The residue at position 212 (Lys-212) is an N6-succinyllysine; alternate.

This sequence belongs to the short-chain dehydrogenases/reductases (SDR) family. Homotetramer. Component of mitochondrial ribonuclease P, a complex composed of TRMT10C/MRPP1, HSD17B10/MRPP2 and PRORP/MRPP3. Interacts with TRMT10C/MRPP1; forming the MRPP1-MRPP2 subcomplex of the mitochondrial ribonuclease P complex.

The protein resides in the mitochondrion. It localises to the mitochondrion matrix. The protein localises to the mitochondrion nucleoid. The enzyme catalyses a (3S)-3-hydroxyacyl-CoA + NAD(+) = a 3-oxoacyl-CoA + NADH + H(+). It catalyses the reaction (2S,3S)-3-hydroxy-2-methylbutanoyl-CoA + NAD(+) = 2-methyl-3-oxobutanoyl-CoA + NADH + H(+). It carries out the reaction testosterone + NAD(+) = androst-4-ene-3,17-dione + NADH + H(+). The catalysed reaction is 5alpha-androstane-3alpha,17beta-diol + NAD(+) = 17beta-hydroxy-5alpha-androstan-3-one + NADH + H(+). The enzyme catalyses 17beta-estradiol + NAD(+) = estrone + NADH + H(+). It catalyses the reaction cholate + NAD(+) = 3alpha,12alpha-dihydroxy-7-oxo-5beta-cholanate + NADH + H(+). It carries out the reaction (3S)-3-hydroxybutanoyl-CoA + NAD(+) = acetoacetyl-CoA + NADH + H(+). The catalysed reaction is (3S)-hydroxyoctanoyl-CoA + NAD(+) = 3-oxooctanoyl-CoA + NADH + H(+). The enzyme catalyses (3S)-hydroxyhexadecanoyl-CoA + NAD(+) = 3-oxohexadecanoyl-CoA + NADH + H(+). It catalyses the reaction 17beta-hydroxy-5alpha-androstan-3-one + NAD(+) = 5alpha-androstan-3,17-dione + NADH + H(+). It carries out the reaction 5alpha-pregnan-20beta-ol-3-one + NAD(+) = 5alpha-pregnane-3,20-dione + NADH + H(+). The catalysed reaction is 3alpha-hydroxy-5alpha-pregnan-20-one + NAD(+) = 5alpha-pregnane-3,20-dione + NADH + H(+). The enzyme catalyses cortisone + NAD(+) = 17alpha-hydroxypregn-4-en-3,11,20-trione-21-al + NADH + H(+). It catalyses the reaction 11-dehydrocorticosterone + NAD(+) = pregn-4-ene-3,11,20,21-tetraone + NADH + H(+). It carries out the reaction cortisol + NAD(+) = 11beta,17alpha-dihydroxypregn-4-ene-3,20,21-trione + NADH + H(+). The catalysed reaction is chenodeoxycholate + NAD(+) = 7-oxolithocholate + NADH + H(+). The enzyme catalyses ursodeoxycholate + NAD(+) = 7-oxolithocholate + NADH + H(+). It catalyses the reaction 3beta,7beta-dihydroxy-5beta-cholan-24-oate + NAD(+) = 3beta-hydroxy-7-oxo-5beta-cholan-24-oate + NADH + H(+). It participates in amino-acid degradation; L-isoleucine degradation. It functions in the pathway lipid metabolism; fatty acid beta-oxidation. The protein operates within steroid metabolism. Its pathway is lipid metabolism; bile acid biosynthesis. Its function is as follows. Mitochondrial dehydrogenase involved in pathways of fatty acid, branched-chain amino acid and steroid metabolism. Acts as (S)-3-hydroxyacyl-CoA dehydrogenase in mitochondrial fatty acid beta-oxidation, a major degradation pathway of fatty acids. Catalyzes the third step in the beta-oxidation cycle, namely the reversible conversion of (S)-3-hydroxyacyl-CoA to 3-ketoacyl-CoA. Preferentially accepts straight medium- and short-chain acyl-CoA substrates with highest efficiency for (3S)-hydroxybutanoyl-CoA. Acts as 3-hydroxy-2-methylbutyryl-CoA dehydrogenase in branched-chain amino acid catabolic pathway. Catalyzes the oxidation of 3-hydroxy-2-methylbutanoyl-CoA into 2-methyl-3-oxobutanoyl-CoA, a step in isoleucine degradation pathway. Has hydroxysteroid dehydrogenase activity toward steroid hormones and bile acids. Catalyzes the oxidation of 3alpha-, 17beta-, 20beta- and 21-hydroxysteroids and 7alpha- and 7beta-hydroxy bile acids. Oxidizes allopregnanolone/brexanolone at the 3alpha-hydroxyl group, which is known to be critical for the activation of gamma-aminobutyric acid receptors (GABAARs) chloride channel. Has phospholipase C-like activity toward cardiolipin and its oxidized species. Likely oxidizes the 2'-hydroxyl in the head group of cardiolipin to form a ketone intermediate that undergoes nucleophilic attack by water and fragments into diacylglycerol, dihydroxyacetone and orthophosphate. Has higher affinity for cardiolipin with oxidized fatty acids and may degrade these species during the oxidative stress response to protect cells from apoptosis. By interacting with intracellular amyloid-beta, it may contribute to the neuronal dysfunction associated with Alzheimer disease (AD). Essential for structural and functional integrity of mitochondria. In addition to mitochondrial dehydrogenase activity, moonlights as a component of mitochondrial ribonuclease P, a complex that cleaves tRNA molecules in their 5'-ends. Together with TRMT10C/MRPP1, forms a subcomplex of the mitochondrial ribonuclease P, named MRPP1-MRPP2 subcomplex, which displays functions that are independent of the ribonuclease P activity. The MRPP1-MRPP2 subcomplex catalyzes the formation of N(1)-methylguanine and N(1)-methyladenine at position 9 (m1G9 and m1A9, respectively) in tRNAs; HSD17B10/MRPP2 acting as a non-catalytic subunit. The MRPP1-MRPP2 subcomplex also acts as a tRNA maturation platform: following 5'-end cleavage by the mitochondrial ribonuclease P complex, the MRPP1-MRPP2 subcomplex enhances the efficiency of 3'-processing catalyzed by ELAC2, retains the tRNA product after ELAC2 processing and presents the nascent tRNA to the mitochondrial CCA tRNA nucleotidyltransferase TRNT1 enzyme. Associates with mitochondrial DNA complexes at the nucleoids to initiate RNA processing and ribosome assembly. The protein is 3-hydroxyacyl-CoA dehydrogenase type-2 (Hsd17b10) of Mus musculus (Mouse).